Consider the following 346-residue polypeptide: UDP-N-acetylenolpyruvoylglucosamine reductase (346 aa).

In terms of domain architecture, FAD-binding PCMH-type spans Leu-18 to His-189. Residue Arg-165 is part of the active site. Ser-240 serves as the catalytic Proton donor. The active site involves Glu-336.

Belongs to the MurB family. FAD serves as cofactor.

The protein resides in the cytoplasm. The catalysed reaction is UDP-N-acetyl-alpha-D-muramate + NADP(+) = UDP-N-acetyl-3-O-(1-carboxyvinyl)-alpha-D-glucosamine + NADPH + H(+). The protein operates within cell wall biogenesis; peptidoglycan biosynthesis. Cell wall formation. The chain is UDP-N-acetylenolpyruvoylglucosamine reductase from Neisseria meningitidis serogroup A / serotype 4A (strain DSM 15465 / Z2491).